A 163-amino-acid polypeptide reads, in one-letter code: 6,7-dimethyl-8-ribityllumazine synthase (163 aa).

5-amino-6-(D-ribitylamino)uracil-binding positions include F27, 58–60 (ALE), and 87–89 (CVV). Residue 92-93 (DT) coordinates (2S)-2-hydroxy-3-oxobutyl phosphate. The Proton donor role is filled by H95. Residue N120 participates in 5-amino-6-(D-ribitylamino)uracil binding. R134 is a (2S)-2-hydroxy-3-oxobutyl phosphate binding site.

The protein belongs to the DMRL synthase family.

The catalysed reaction is (2S)-2-hydroxy-3-oxobutyl phosphate + 5-amino-6-(D-ribitylamino)uracil = 6,7-dimethyl-8-(1-D-ribityl)lumazine + phosphate + 2 H2O + H(+). It functions in the pathway cofactor biosynthesis; riboflavin biosynthesis; riboflavin from 2-hydroxy-3-oxobutyl phosphate and 5-amino-6-(D-ribitylamino)uracil: step 1/2. Its function is as follows. Catalyzes the formation of 6,7-dimethyl-8-ribityllumazine by condensation of 5-amino-6-(D-ribitylamino)uracil with 3,4-dihydroxy-2-butanone 4-phosphate. This is the penultimate step in the biosynthesis of riboflavin. The sequence is that of 6,7-dimethyl-8-ribityllumazine synthase from Rhodopseudomonas palustris (strain BisA53).